Here is a 357-residue protein sequence, read N- to C-terminus: UDP-N-acetylglucosamine--N-acetylmuramyl-(pentapeptide) pyrophosphoryl-undecaprenol N-acetylglucosamine transferase (357 aa).

Residues 15-17 (TGG), N123, R164, S190, and Q284 each bind UDP-N-acetyl-alpha-D-glucosamine.

This sequence belongs to the glycosyltransferase 28 family. MurG subfamily.

The protein localises to the cell inner membrane. It carries out the reaction di-trans,octa-cis-undecaprenyl diphospho-N-acetyl-alpha-D-muramoyl-L-alanyl-D-glutamyl-meso-2,6-diaminopimeloyl-D-alanyl-D-alanine + UDP-N-acetyl-alpha-D-glucosamine = di-trans,octa-cis-undecaprenyl diphospho-[N-acetyl-alpha-D-glucosaminyl-(1-&gt;4)]-N-acetyl-alpha-D-muramoyl-L-alanyl-D-glutamyl-meso-2,6-diaminopimeloyl-D-alanyl-D-alanine + UDP + H(+). It participates in cell wall biogenesis; peptidoglycan biosynthesis. Cell wall formation. Catalyzes the transfer of a GlcNAc subunit on undecaprenyl-pyrophosphoryl-MurNAc-pentapeptide (lipid intermediate I) to form undecaprenyl-pyrophosphoryl-MurNAc-(pentapeptide)GlcNAc (lipid intermediate II). The polypeptide is UDP-N-acetylglucosamine--N-acetylmuramyl-(pentapeptide) pyrophosphoryl-undecaprenol N-acetylglucosamine transferase (Synechococcus elongatus (strain ATCC 33912 / PCC 7942 / FACHB-805) (Anacystis nidulans R2)).